Consider the following 252-residue polypeptide: 3-deoxy-manno-octulosonate cytidylyltransferase (252 aa).

This sequence belongs to the KdsB family.

It localises to the cytoplasm. It carries out the reaction 3-deoxy-alpha-D-manno-oct-2-ulosonate + CTP = CMP-3-deoxy-beta-D-manno-octulosonate + diphosphate. It functions in the pathway nucleotide-sugar biosynthesis; CMP-3-deoxy-D-manno-octulosonate biosynthesis; CMP-3-deoxy-D-manno-octulosonate from 3-deoxy-D-manno-octulosonate and CTP: step 1/1. The protein operates within bacterial outer membrane biogenesis; lipopolysaccharide biosynthesis. Its function is as follows. Activates KDO (a required 8-carbon sugar) for incorporation into bacterial lipopolysaccharide in Gram-negative bacteria. This is 3-deoxy-manno-octulosonate cytidylyltransferase from Vibrio cholerae serotype O1 (strain ATCC 39315 / El Tor Inaba N16961).